Reading from the N-terminus, the 96-residue chain is Small ribosomal subunit protein bS6 (96 aa).

Belongs to the bacterial ribosomal protein bS6 family.

In terms of biological role, binds together with bS18 to 16S ribosomal RNA. The sequence is that of Small ribosomal subunit protein bS6 from Bacillus cereus (strain G9842).